A 168-amino-acid polypeptide reads, in one-letter code: MFWKLSLTLLLVAVLVKVAETRKNRPAGAIPSPYKDGSSNNSERWHHQIKEVLASSQEALVVTERKYLKSDWCKTQPLRQTVSEEGCRSRTILNRFCYGQCNSFYIPRHVKKEEDSFQSCAFCKPQRVTSVIVELECPGLDPPFRIKKIQKVKHCRCMSVNLSDSDKQ.

The first 21 residues, 1-21 (MFWKLSLTLLLVAVLVKVAET), serve as a signal peptide directing secretion. Asn-40 carries N-linked (GlcNAc...) asparagine glycosylation. 4 cysteine pairs are disulfide-bonded: Cys-73/Cys-123, Cys-87/Cys-137, Cys-97/Cys-155, and Cys-101/Cys-157. One can recognise a CTCK domain in the interval 73–163 (CKTQPLRQTV…HCRCMSVNLS (91 aa)). Residue Asn-161 is glycosylated (N-linked (GlcNAc...) asparagine).

It belongs to the DAN family. As to quaternary structure, homodimer. Interacts with BMP2, BMP4 and BMP7, but has lower affinity for BMP7 than for BMP2 and BMP4. Binds heparin; this impairs the interaction with BMP2. N-glycosylated. In terms of tissue distribution, highly expressed in the ovary, followed by brain, spleen, colon, kidney and uterus. In ovary expressed in granulosa cells of selective early antral follicles.

It localises to the secreted. Functionally, cytokine that inhibits the activity of BMP2 and BMP4 in a dose-dependent manner, and thereby modulates signaling by BMP family members. Contributes to the regulation of embryonic morphogenesis via BMP family members. Antagonizes BMP4-induced suppression of progesterone production in granulosa cells. The protein is Gremlin-2 (Grem2) of Mus musculus (Mouse).